The sequence spans 166 residues: Large ribosomal subunit protein uL10 (166 aa).

It belongs to the universal ribosomal protein uL10 family. As to quaternary structure, part of the ribosomal stalk of the 50S ribosomal subunit. The N-terminus interacts with L11 and the large rRNA to form the base of the stalk. The C-terminus forms an elongated spine to which L12 dimers bind in a sequential fashion forming a multimeric L10(L12)X complex.

Its function is as follows. Forms part of the ribosomal stalk, playing a central role in the interaction of the ribosome with GTP-bound translation factors. This chain is Large ribosomal subunit protein uL10, found in Streptococcus pneumoniae (strain ATCC 700669 / Spain 23F-1).